The chain runs to 346 residues: Holliday junction branch migration complex subunit RuvB (346 aa).

The segment covering 1 to 16 has biased composition (basic and acidic residues); that stretch reads MSDADRLITPEKRGED. A disordered region spans residues 1 to 23; sequence MSDADRLITPEKRGEDIDTTLRP. Positions 1-182 are large ATPase domain (RuvB-L); that stretch reads MSDADRLITP…FGIPVRLAFY (182 aa). Residues L21, R22, G63, K66, T67, T68, 129–131, R172, Y182, and R219 each bind ATP; that span reads EDF. Position 67 (T67) interacts with Mg(2+). Residues 183-253 are small ATPAse domain (RuvB-S); the sequence is TVDELELIVR…IADEALTRLL (71 aa). The segment at 256–346 is head domain (RuvB-H); it reads NMGLDQLDMR…AQFRLTLEDD (91 aa). DNA contacts are provided by R292, R311, and R316.

It belongs to the RuvB family. Homohexamer. Forms an RuvA(8)-RuvB(12)-Holliday junction (HJ) complex. HJ DNA is sandwiched between 2 RuvA tetramers; dsDNA enters through RuvA and exits via RuvB. An RuvB hexamer assembles on each DNA strand where it exits the tetramer. Each RuvB hexamer is contacted by two RuvA subunits (via domain III) on 2 adjacent RuvB subunits; this complex drives branch migration. In the full resolvosome a probable DNA-RuvA(4)-RuvB(12)-RuvC(2) complex forms which resolves the HJ.

The protein localises to the cytoplasm. It carries out the reaction ATP + H2O = ADP + phosphate + H(+). Its function is as follows. The RuvA-RuvB-RuvC complex processes Holliday junction (HJ) DNA during genetic recombination and DNA repair, while the RuvA-RuvB complex plays an important role in the rescue of blocked DNA replication forks via replication fork reversal (RFR). RuvA specifically binds to HJ cruciform DNA, conferring on it an open structure. The RuvB hexamer acts as an ATP-dependent pump, pulling dsDNA into and through the RuvAB complex. RuvB forms 2 homohexamers on either side of HJ DNA bound by 1 or 2 RuvA tetramers; 4 subunits per hexamer contact DNA at a time. Coordinated motions by a converter formed by DNA-disengaged RuvB subunits stimulates ATP hydrolysis and nucleotide exchange. Immobilization of the converter enables RuvB to convert the ATP-contained energy into a lever motion, pulling 2 nucleotides of DNA out of the RuvA tetramer per ATP hydrolyzed, thus driving DNA branch migration. The RuvB motors rotate together with the DNA substrate, which together with the progressing nucleotide cycle form the mechanistic basis for DNA recombination by continuous HJ branch migration. Branch migration allows RuvC to scan DNA until it finds its consensus sequence, where it cleaves and resolves cruciform DNA. In Agrobacterium fabrum (strain C58 / ATCC 33970) (Agrobacterium tumefaciens (strain C58)), this protein is Holliday junction branch migration complex subunit RuvB.